A 434-amino-acid polypeptide reads, in one-letter code: MTVTDIASRTYNHGWRLDPIVRSLLDTDFYKLLMLQMIREFYPDQKVTFSVINRTKRVRLGDVIDEGELRAQLDHARTIRFTKKELIWLAGNTFYGKTHMFSPDFLAWLAHFRLPDYELHKADGQYELHFHGPWTHTTMWEIPALAIVNELRSRQAMKGQGRFALDVLFARAKAKLWAKVERLRRLEGLRLSDFGTRRRHGFLWQRWCVEAVKEGLGPSFTGTSNVLLAMDNDLEAIGTNAHELPMVAAALARDDDELRFAPYRILDQWRQTYAGNLLIALPDAFGTKAFLRDAPDWVADWTGFRPDSAPPIEAGEEIIAWWKSKGRDPKQKLLVFSDAMDVESIEQIHHRFSDRVRLSFGWGTNLTNDFVGCAPDGSVDLDPISLVCKVTSVDGQPAVKLSDNPEKATGDPAEIARYLRVFGDAGRVRTPVVV.

Phosphohistidine; by autocatalysis is present on His-242.

Belongs to the NAPRTase family. Transiently phosphorylated on a His residue during the reaction cycle. Phosphorylation strongly increases the affinity for substrates and increases the rate of nicotinate D-ribonucleotide production. Dephosphorylation regenerates the low-affinity form of the enzyme, leading to product release.

It catalyses the reaction nicotinate + 5-phospho-alpha-D-ribose 1-diphosphate + ATP + H2O = nicotinate beta-D-ribonucleotide + ADP + phosphate + diphosphate. It functions in the pathway cofactor biosynthesis; NAD(+) biosynthesis; nicotinate D-ribonucleotide from nicotinate: step 1/1. In terms of biological role, catalyzes the synthesis of beta-nicotinate D-ribonucleotide from nicotinate and 5-phospho-D-ribose 1-phosphate at the expense of ATP. The sequence is that of Nicotinate phosphoribosyltransferase from Bradyrhizobium sp. (strain BTAi1 / ATCC BAA-1182).